Consider the following 260-residue polypeptide: Beta-lactamase SHV-6 (260 aa).

Residues 1–11 form the signal peptide; that stretch reads LLATLPLAVHA. S56 functions as the Acyl-ester intermediate in the catalytic mechanism. An intrachain disulfide couples C63 to C109. Catalysis depends on E154, which acts as the Proton acceptor. 220 to 222 is a substrate binding site; the sequence is KTG.

It belongs to the class-A beta-lactamase family.

It carries out the reaction a beta-lactam + H2O = a substituted beta-amino acid. Functionally, SHV enzymes hydrolyze broad spectrum cephalosporins notably cefotaxime and ceftazidime. The sequence is that of Beta-lactamase SHV-6 (bla) from Klebsiella pneumoniae.